The following is a 153-amino-acid chain: Alpha-amylase inhibitor 0.28 (153 aa).

The first 30 residues, 1–30 (MWMKTVFWGLLVFMLVATTMAVEYGARSHN), serve as a signal peptide directing secretion. Cystine bridges form between Cys-37–Cys-84, Cys-51–Cys-72, Cys-59–Cys-112, Cys-73–Cys-128, and Cys-86–Cys-143.

It belongs to the protease inhibitor I6 (cereal trypsin/alpha-amylase inhibitor) family. In terms of assembly, monomer. Post-translationally, the disulfide bonds are essential for the inhibitor activity. As to expression, endosperm.

The protein resides in the secreted. Its function is as follows. Alpha-amylase inhibitor. The protein is Alpha-amylase inhibitor 0.28 (IMA1) of Triticum aestivum (Wheat).